A 193-amino-acid chain; its full sequence is ATP-dependent protease subunit HslV (193 aa).

Residue Thr-12 is part of the active site. Na(+)-binding residues include Ala-167, Cys-170, and Thr-173.

Belongs to the peptidase T1B family. HslV subfamily. A double ring-shaped homohexamer of HslV is capped on each side by a ring-shaped HslU homohexamer. The assembly of the HslU/HslV complex is dependent on binding of ATP.

It is found in the cytoplasm. It catalyses the reaction ATP-dependent cleavage of peptide bonds with broad specificity.. With respect to regulation, allosterically activated by HslU binding. Its function is as follows. Protease subunit of a proteasome-like degradation complex believed to be a general protein degrading machinery. The polypeptide is ATP-dependent protease subunit HslV (Bartonella henselae (strain ATCC 49882 / DSM 28221 / CCUG 30454 / Houston 1) (Rochalimaea henselae)).